The chain runs to 152 residues: uncharacterized protein (152 aa).

A disordered region spans residues 127–152; it reads EKEKAERKAEKAKKNKKKSSTKTKKK. Residues 136-152 show a composition bias toward basic residues; that stretch reads EKAKKNKKKSSTKTKKK.

This sequence belongs to the mimivirus R546 family.

This is an uncharacterized protein from Sputnik virophage.